The primary structure comprises 929 residues: DNA mismatch repair protein MutS (929 aa).

The segment at 22–46 (PAAPRSTGSAAAPPPSPAVLDDRSG) is disordered. Over residues 23–32 (AAPRSTGSAA) the composition is skewed to low complexity. 678 to 685 (GPNMAGKS) is a binding site for ATP.

Belongs to the DNA mismatch repair MutS family.

In terms of biological role, this protein is involved in the repair of mismatches in DNA. It is possible that it carries out the mismatch recognition step. This protein has a weak ATPase activity. In Rhodospirillum rubrum (strain ATCC 11170 / ATH 1.1.1 / DSM 467 / LMG 4362 / NCIMB 8255 / S1), this protein is DNA mismatch repair protein MutS.